Reading from the N-terminus, the 471-residue chain is Ribosome biogenesis protein YTM1 (471 aa).

The tract at residues 10–92 (VTARFTTRDE…ETRLEVEYTR (83 aa)) is ubiquitin-like (UBL) domain. 3 WD repeats span residues 119 to 158 (SRAGAWSGGSVQSGQERILSASYDGLVRVWNTSGDVLATS), 165 to 203 (GRITSLKSAKWLSDKKIVAAGMDNTVRVFKYDEDTRTIT), and 210 to 249 (SHRWGVEDVAVHGPSSRILSASSDNTISLFSSNAKENPVA). The interval 245 to 274 (ENPVAPSSLLPNSTAASNKRQKLSKPDRTV) is disordered. The span at 253–262 (LLPNSTAASN) shows a compositional bias: polar residues. WD repeat units lie at residues 285–325 (GHSS…CVDT), 327–366 (TTGHSLLSLCAIPSRNLIATGTSARHITLIDPRVSATQIS), 372–412 (GHKN…TGGQ), and 436–471 (GHGEGVKVFGVRWDKDVGIVSGGEDKKIQINRALGS). Residues 412–440 (QVGEGQQGESVHTIHRQGQSGPGKGHGEG) form a disordered region.

Belongs to the WD repeat WDR12/YTM1 family. Component of the NOP7 complex, composed of ERB1, NOP7 and YTM1. The complex is held together by ERB1, which interacts with NOP7 via its N-terminal domain and with YTM1 via a high-affinity interaction between the seven-bladed beta-propeller domains of the 2 proteins. The NOP7 complex associates with the 66S pre-ribosome. Interacts (via UBL domain) with MDN1 (via VWFA/MIDAS domain).

The protein localises to the nucleus. The protein resides in the nucleolus. Its subcellular location is the nucleoplasm. Functionally, component of the NOP7 complex, which is required for maturation of the 25S and 5.8S ribosomal RNAs and formation of the 60S ribosome. The polypeptide is Ribosome biogenesis protein YTM1 (Phaeosphaeria nodorum (strain SN15 / ATCC MYA-4574 / FGSC 10173) (Glume blotch fungus)).